Consider the following 52-residue polypeptide: Sperm protamine P1 (52 aa).

Belongs to the protamine P1 family. In terms of assembly, cross-linked by interchain disulfide bonds around the DNA-helix. Testis.

It localises to the nucleus. The protein resides in the chromosome. In terms of biological role, protamines substitute for histones in the chromatin of sperm during the haploid phase of spermatogenesis. They compact sperm DNA into a highly condensed, stable and inactive complex. This chain is Sperm protamine P1 (PRM1), found in Alouatta seniculus (Red howler monkey).